The following is a 93-amino-acid chain: Putative pterin-4-alpha-carbinolamine dehydratase (93 aa).

Belongs to the pterin-4-alpha-carbinolamine dehydratase family.

The enzyme catalyses (4aS,6R)-4a-hydroxy-L-erythro-5,6,7,8-tetrahydrobiopterin = (6R)-L-erythro-6,7-dihydrobiopterin + H2O. The sequence is that of Putative pterin-4-alpha-carbinolamine dehydratase from Synechococcus sp. (strain WH7803).